The following is a 191-amino-acid chain: Transcription factor HES-2 (191 aa).

A disordered region spans residues 1–26 (MAPNVALADSMHNYQPKPGKRNQEAS). A bHLH domain is found at 28 to 85 (LRKTLKPLMEKRRRARINESLNQLKTLILPLIGKDNSRYSKLEKADILEMTVRFLRDI). The Orange domain occupies 97-130 (YKEGYRACVERLSAILGKSHVLTGEASNRLLEYL). Polar residues-rich tracts occupy residues 159–173 (RTSQ…QPSS) and 182–191 (QLNSSIWRPW). Residues 159–191 (RTSQFGSPLQNQPSSHRPAPCPPQLNSSIWRPW) form a disordered region. The WRPW motif signature appears at 188–191 (WRPW).

Transcription repression requires formation of a complex with a corepressor protein of the Groucho/TLE family. Homodimer, and heterodimer with the other bHLH proteins neurod1, neurod4/ath3, hes1/hairy1 and hes6r. Weakly interacts with the bHLH protein hey1/hrt1. Expressed in the animal half of the early cleavage stage embryo. During neurulation and organogenesis, the otic vesicles and retina are the main sites of expression; expression in otic placodes begins as early as stage 13.5, persisting in the otic vesicles at stage 30 and beyond. Also transiently expressed in the olfactory placodes. In addition, weakly expressed in primary neurons. Expression in the retina begins at stage 21, and is seen throughout the neural retina by stage 30. From stage 35 onwards, expression progressively declines in the central retina, while remaining high in the margins. At stage 41, expression becomes restricted to the ciliary marginal zone (CMZ) of the retina, the only region where retinogenesis is still occurring.

It is found in the nucleus. Transcriptional repressor. Essential in the retina to govern glial versus neuronal differentiation. Promotes gliogenesis through the inhibition of neuronal differentiation by at least two distinct mechanisms; represses proneural gene transcription, and also physically interacts with proneural proteins, including neurod1. In Xenopus laevis (African clawed frog), this protein is Transcription factor HES-2 (hes2).